The primary structure comprises 306 residues: Beta-lactamase 1 (306 aa).

The first 27 residues, 1 to 27 (MILKNKRMLKIGICVGILGLSITSLEA), serve as a signal peptide directing secretion. Serine 91 functions as the Acyl-ester intermediate in the catalytic mechanism. Glutamate 187 functions as the Proton acceptor in the catalytic mechanism. 253-255 (KSG) provides a ligand contact to substrate.

It belongs to the class-A beta-lactamase family.

It catalyses the reaction a beta-lactam + H2O = a substituted beta-amino acid. Functionally, this protein is a beta-lactamase with a substrate specificity for penicillins. In Bacillus cereus, this protein is Beta-lactamase 1 (blaY).